The sequence spans 570 residues: Formate--tetrahydrofolate ligase (570 aa).

65-72 (TPHGEGKT) is an ATP binding site.

This sequence belongs to the formate--tetrahydrofolate ligase family.

It catalyses the reaction (6S)-5,6,7,8-tetrahydrofolate + formate + ATP = (6R)-10-formyltetrahydrofolate + ADP + phosphate. It functions in the pathway one-carbon metabolism; tetrahydrofolate interconversion. The sequence is that of Formate--tetrahydrofolate ligase from Shewanella sp. (strain ANA-3).